Reading from the N-terminus, the 297-residue chain is NAD kinase (297 aa).

Residue D74 is the Proton acceptor of the active site. Residues 74-75, R79, 148-149, R176, D178, 189-194, and Q248 each bind NAD(+); these read DG, NE, and TAYALS.

It belongs to the NAD kinase family. Requires a divalent metal cation as cofactor.

It localises to the cytoplasm. It carries out the reaction NAD(+) + ATP = ADP + NADP(+) + H(+). Functionally, involved in the regulation of the intracellular balance of NAD and NADP, and is a key enzyme in the biosynthesis of NADP. Catalyzes specifically the phosphorylation on 2'-hydroxyl of the adenosine moiety of NAD to yield NADP. The polypeptide is NAD kinase (Blochmanniella pennsylvanica (strain BPEN)).